A 97-amino-acid polypeptide reads, in one-letter code: Co-chaperonin GroES (97 aa).

This sequence belongs to the GroES chaperonin family. Heptamer of 7 subunits arranged in a ring. Interacts with the chaperonin GroEL.

The protein resides in the cytoplasm. Together with the chaperonin GroEL, plays an essential role in assisting protein folding. The GroEL-GroES system forms a nano-cage that allows encapsulation of the non-native substrate proteins and provides a physical environment optimized to promote and accelerate protein folding. GroES binds to the apical surface of the GroEL ring, thereby capping the opening of the GroEL channel. This chain is Co-chaperonin GroES, found in Arthrobacter sp. (strain FB24).